The primary structure comprises 177 residues: Large ribosomal subunit protein uL6 (177 aa).

The protein belongs to the universal ribosomal protein uL6 family. Part of the 50S ribosomal subunit.

In terms of biological role, this protein binds to the 23S rRNA, and is important in its secondary structure. It is located near the subunit interface in the base of the L7/L12 stalk, and near the tRNA binding site of the peptidyltransferase center. In Azorhizobium caulinodans (strain ATCC 43989 / DSM 5975 / JCM 20966 / LMG 6465 / NBRC 14845 / NCIMB 13405 / ORS 571), this protein is Large ribosomal subunit protein uL6.